We begin with the raw amino-acid sequence, 193 residues long: Acyl carrier protein phosphodiesterase (193 aa).

Belongs to the AcpH family.

It catalyses the reaction holo-[ACP] + H2O = apo-[ACP] + (R)-4'-phosphopantetheine + H(+). Its function is as follows. Converts holo-ACP to apo-ACP by hydrolytic cleavage of the phosphopantetheine prosthetic group from ACP. The chain is Acyl carrier protein phosphodiesterase from Salmonella newport (strain SL254).